An 888-amino-acid polypeptide reads, in one-letter code: Autotaxin (888 aa).

An N-terminal signal peptide occupies residues Met-1–Gly-27. Positions Val-28–Arg-35 are cleaved as a propeptide — removed by furin. Asn-54 is a glycosylation site (N-linked (GlcNAc...) asparagine). SMB domains are found at residues Ile-55–Ala-98 and Gly-99–His-143. Intrachain disulfides connect Cys-59/Cys-76, Cys-63/Cys-94, Cys-74/Cys-87, Cys-80/Cys-86, Cys-103/Cys-120, Cys-108/Cys-138, Cys-118/Cys-131, Cys-124/Cys-130, Cys-149/Cys-195, and Cys-157/Cys-351. The Cell attachment site signature appears at Arg-127–Asp-129. Residues Val-145–Pro-502 are phosphodiesterase. Residues Asp-172 and Thr-210 each coordinate Zn(2+). Catalysis depends on Thr-210, which acts as the Nucleophile. The 1-(9Z-octadecenoyl)-sn-glycero-3-phosphate site is built by Thr-210, Asn-231, and Asp-312. The 1-hexadecanoyl-sn-glycero-3-phosphate site is built by Thr-210, Asn-231, and Asp-312. Residues Thr-210, Asn-231, and Asp-312 each contribute to the 1-tetradecanoyl-sn-glycerol 3-phosphate site. Zn(2+)-binding residues include Asp-312, His-316, Asp-359, and His-360. 5 disulfide bridges follow: Cys-367/Cys-469, Cys-414/Cys-831, Cys-567/Cys-692, Cys-569/Cys-677, and Cys-800/Cys-810. A glycan (N-linked (GlcNAc...) asparagine) is linked at Asn-411. Residue His-475 participates in Zn(2+) binding. His-475 lines the 1-(9Z-octadecenoyl)-sn-glycero-3-phosphate pocket. His-475 contacts 1-hexadecanoyl-sn-glycero-3-phosphate. Residue His-475 coordinates 1-tetradecanoyl-sn-glycerol 3-phosphate. Asn-525 is a glycosylation site (N-linked (GlcNAc...) asparagine). Residues Leu-623–Ile-888 are nuclease-like domain. The Ca(2+) site is built by Asp-765, Asp-767, Asp-769, Leu-771, and Asp-773. N-linked (GlcNAc...) asparagine glycosylation occurs at Asn-832. Residues Ile-855–Thr-876 are required for secretion.

This sequence belongs to the nucleotide pyrophosphatase/phosphodiesterase family. Zn(2+) serves as cofactor. The cofactor is Ca(2+). N-glycosylation, but not furin-cleavage, plays a critical role on secretion and on lysoPLD activity. In terms of processing, the interdomain disulfide bond between Cys-414 and Cys-831 is essential for catalytic activity. As to expression, detected in fetal serum (at protein level).

Its subcellular location is the secreted. It carries out the reaction a 1-O-alkyl-sn-glycero-3-phosphoethanolamine + H2O = a 1-O-alkyl-sn-glycero-3-phosphate + ethanolamine + H(+). It catalyses the reaction a 1-acyl-sn-glycero-3-phosphoethanolamine + H2O = a 1-acyl-sn-glycero-3-phosphate + ethanolamine + H(+). The catalysed reaction is 1-(9Z-octadecenoyl)-sn-glycero-3-phosphoethanolamine + H2O = 1-(9Z-octadecenoyl)-sn-glycero-3-phosphate + ethanolamine + H(+). The enzyme catalyses a 1-O-alkyl-sn-glycero-3-phosphocholine + H2O = a 1-O-alkyl-sn-glycero-3-phosphate + choline + H(+). It carries out the reaction 1-O-(9Z-octadecenyl)-sn-glycero-3-phosphocholine + H2O = 1-O-(9Z-octadecenyl)-sn-glycero-3-phosphate + choline + H(+). It catalyses the reaction 1-O-hexadecyl-sn-glycero-3-phosphocholine + H2O = 1-O-hexadecyl-sn-glycero-3-phosphate + choline + H(+). The catalysed reaction is a 1-O-(1Z-alkenyl)-sn-glycero-3-phosphocholine + H2O = a 1-O-(1Z-alkenyl)-sn-glycero-3-phosphate + choline + H(+). The enzyme catalyses a 1-acyl-sn-glycero-3-phosphocholine + H2O = a 1-acyl-sn-glycero-3-phosphate + choline + H(+). It carries out the reaction 1-dodecanoyl-sn-glycero-3-phosphocholine + H2O = 1-dodecanoyl-sn-glycerol 3-phosphate + choline + H(+). It catalyses the reaction 1-(9Z-octadecenoyl)-sn-glycero-3-phosphocholine + H2O = 1-(9Z-octadecenoyl)-sn-glycero-3-phosphate + choline + H(+). The catalysed reaction is 1-tetradecanoyl-sn-glycero-3-phosphocholine + H2O = 1-tetradecanoyl-sn-glycerol 3-phosphate + choline + H(+). The enzyme catalyses 1-decanoyl-sn-glycero-3-phosphocholine + H2O = 1-decanoyl-sn-glycero-3-phosphate + choline + H(+). It carries out the reaction 1-octadecanoyl-sn-glycero-3-phosphocholine + H2O = 1-octadecanoyl-sn-glycero-3-phosphate + choline + H(+). It catalyses the reaction 1-hexadecanoyl-sn-glycero-3-phosphocholine + H2O = 1-hexadecanoyl-sn-glycero-3-phosphate + choline + H(+). The catalysed reaction is 1-hexanoyl-sn-glycero-3-phosphocholine + H2O = 1-hexanoyl-sn-glycero-3-phosphate + choline + H(+). The enzyme catalyses 1-(9Z,12Z)-octadecadienoyl-sn-glycero-3-phosphocholine + H2O = 1-(9Z,12Z)-octadecadienoyl-sn-glycero-3-phosphate + choline + H(+). It carries out the reaction sphing-4-enine-phosphocholine + H2O = sphing-4-enine 1-phosphate + choline + H(+). It catalyses the reaction 1-(5Z,8Z,11Z,14Z-eicosatetraenoyl)-sn-glycero-3-phosphocholine + H2O = 1-(5Z,8Z,11Z,14Z-eicosatetraenoyl)-sn-glycero-3-phosphate + choline + H(+). The catalysed reaction is a 2-acyl-sn-glycero-3-phosphocholine + H2O = a 2-acyl-sn-glycerol 3-phosphate + choline + H(+). The enzyme catalyses a 1,2-diacyl-sn-glycero-3-phosphocholine + H2O = a 1,2-diacyl-sn-glycero-3-phosphate + choline + H(+). It carries out the reaction 1,2-dioctanoyl-sn-glycero-3-phosphocholine + H2O = 1,2-dioctanoyl-sn-glycero-3-phosphate + choline + H(+). It catalyses the reaction 1,2-didecanoyl-sn-glycero-3-phosphocholine + H2O = 1,2-didecanoyl-sn-glycero-3-phosphate + choline + H(+). The catalysed reaction is a 1-acyl-sn-glycero-3-phospho-L-serine + H2O = a 1-acyl-sn-glycero-3-phosphate + L-serine + H(+). The enzyme catalyses 1-(9Z-octadecenoyl)-sn-glycero-3-phospho-L-serine + H2O = 1-(9Z-octadecenoyl)-sn-glycero-3-phosphate + L-serine + H(+). It carries out the reaction a 2-acyl-sn-glycero-3-phospho-L-serine + H2O = a 2-acyl-sn-glycerol 3-phosphate + L-serine + H(+). In terms of biological role, secreted lysophospholipase D that hydrolyzes lysophospholipids to produce the signaling molecule lysophosphatidic acid (LPA) in extracellular fluids. Its major substrate is lysophosphatidylcholine. Can also act on sphingosylphosphorylcholine producing sphingosine-1-phosphate, a modulator of cell motility. Can hydrolyze, in vitro, bis-pNPP, to some extent pNP-TMP, and barely ATP. Involved in several motility-related processes such as angiogenesis and neurite outgrowth. Acts as an angiogenic factor by stimulating migration of smooth muscle cells and microtubule formation. Stimulates migration of melanoma cells, probably via a pertussis toxin-sensitive G protein. May have a role in induction of parturition. Possible involvement in cell proliferation and adipose tissue development. Required for LPA production in activated platelets, cleaves the sn-1 lysophospholipids to generate sn-1 lysophosphatidic acids containing predominantly 18:2 and 20:4 fatty acids. Shows a preference for the sn-1 to the sn-2 isomer of 1-O-alkyl-sn-glycero-3-phosphocholine (lyso-PAF). This chain is Autotaxin, found in Bos taurus (Bovine).